We begin with the raw amino-acid sequence, 100 residues long: Small cysteine and glycine repeat-containing protein 3 (100 aa).

A 13 X 2 AA repeats of CG region spans residues 4 to 82 (CGCGSCGGCG…RRTCRSCGCG (79 aa)).

The protein belongs to the KRTAP type 28 family.

Functionally, in the hair cortex, hair keratin intermediate filaments are embedded in an interfilamentous matrix, consisting of hair keratin-associated proteins (KRTAP), which are essential for the formation of a rigid and resistant hair shaft through their extensive disulfide bond cross-linking with abundant cysteine residues of hair keratins. The matrix proteins include the high-sulfur and high-glycine-tyrosine keratins. The chain is Small cysteine and glycine repeat-containing protein 3 from Homo sapiens (Human).